The primary structure comprises 526 residues: Probable Xaa-Pro aminopeptidase GLRG_02280 (526 aa).

4 residues coordinate Mn(2+): aspartate 285, aspartate 296, glutamate 454, and glutamate 495.

This sequence belongs to the peptidase M24B family. Mn(2+) serves as cofactor.

It carries out the reaction Release of any N-terminal amino acid, including proline, that is linked to proline, even from a dipeptide or tripeptide.. Functionally, catalyzes the removal of a penultimate prolyl residue from the N-termini of peptides. The protein is Probable Xaa-Pro aminopeptidase GLRG_02280 of Colletotrichum graminicola (strain M1.001 / M2 / FGSC 10212) (Maize anthracnose fungus).